Here is a 664-residue protein sequence, read N- to C-terminus: Translation factor GUF1, mitochondrial (664 aa).

Residues 63 to 246 form the tr-type G domain; sequence SNYRNFSIVA…SIINNIPPPQ (184 aa). GTP contacts are provided by residues 72 to 79, 139 to 143, and 193 to 196; these read AHVDHGKS, DTPGH, and NKID.

This sequence belongs to the TRAFAC class translation factor GTPase superfamily. Classic translation factor GTPase family. LepA subfamily.

The protein resides in the mitochondrion inner membrane. It carries out the reaction GTP + H2O = GDP + phosphate + H(+). Its function is as follows. Promotes mitochondrial protein synthesis. May act as a fidelity factor of the translation reaction, by catalyzing a one-codon backward translocation of tRNAs on improperly translocated ribosomes. Binds to mitochondrial ribosomes in a GTP-dependent manner. This is Translation factor GUF1, mitochondrial from Clavispora lusitaniae (strain ATCC 42720) (Yeast).